The sequence spans 608 residues: Alpha-1,3-galactosidase A (608 aa).

The signal sequence occupies residues 1–21 (MQRRTFIKSISAMMATSTTLG). Cys22 is lipidated: N-palmitoyl cysteine. The S-diacylglycerol cysteine moiety is linked to residue Cys22. PbH1 repeat units follow at residues 262–292 (TKNT…KLDN), 318–340 (KGHV…NVHG), 426–448 (PDHV…LLTV), 449–470 (SGKI…KIGS), and 481–507 (VESV…DIVP).

Belongs to the glycosyl hydrolase 110 family. A subfamily.

Its subcellular location is the cell membrane. The enzyme catalyses Hydrolysis of terminal, non-reducing branched (1-&gt;3)-alpha-D-galactosidic residues, producing free D-galactose.. It carries out the reaction Hydrolysis of terminal, non-reducing alpha-D-galactose residues in alpha-D-galactosides, including galactose oligosaccharides, galactomannans and galactolipids.. Its function is as follows. Alpha-galactosidase that specifically removes branched alpha-1,3-linked galactose residues present in blood group B antigens. Has no activity toward linear alpha-1,3-linked galactose residues. The sequence is that of Alpha-1,3-galactosidase A (glaA) from Shewanella woodyi (strain ATCC 51908 / MS32).